Here is a 243-residue protein sequence, read N- to C-terminus: Small ribosomal subunit protein uS3 (243 aa).

Position 2 is an N-acetylalanine (Ala2). Position 6 is a phosphoserine; by PKC/PRKCD (Ser6). Residues 21–92 (LNEFLTRELA…SVELYAEKVA (72 aa)) form the KH type-2 domain. Position 35 is a phosphoserine (Ser35). Thr42 is subject to Phosphothreonine; by MAPK. At Lys62 the chain carries N6-acetyllysine. Residues Arg64, Arg65, and Arg67 each carry the asymmetric dimethylarginine; by PRMT1 modification. Phosphothreonine; by PKB is present on Thr70. Lys90 is covalently cross-linked (Glycyl lysine isopeptide (Lys-Gly) (interchain with G-Cter in ubiquitin)). Position 104 is a phosphoserine (Ser104). The residue at position 132 (Lys132) is an N6-succinyllysine. Residue Lys202 forms a Glycyl lysine isopeptide (Lys-Gly) (interchain with G-Cter in ubiquitin) linkage. Residue Ser209 is modified to Phosphoserine; by IKKB. A Glycyl lysine isopeptide (Lys-Gly) (interchain with G-Cter in SUMO2); alternate cross-link involves residue Lys214. Lys214 is covalently cross-linked (Glycyl lysine isopeptide (Lys-Gly) (interchain with G-Cter in ubiquitin); alternate). Residues 214–243 (KDEILPTTPISEQKGGKPEPPAMPQPVPTA) are disordered. A Phosphothreonine modification is found at Thr220. Thr221 is subject to Phosphothreonine; by CDK1 and PKC/PRKCD. Ser224 carries the phosphoserine modification. Lys230 is covalently cross-linked (Glycyl lysine isopeptide (Lys-Gly) (interchain with G-Cter in SUMO2)). A compositionally biased stretch (pro residues) spans 231-243 (PEPPAMPQPVPTA). Thr242 is subject to Phosphothreonine.

The protein belongs to the universal ribosomal protein uS3 family. As to quaternary structure, component of the 40S small ribosomal subunit. Identified in a IGF2BP1-dependent mRNP granule complex containing untranslated mRNAs. Interacts with HNRPD. Interacts with PRMT1; the interaction methylates RPS3. Interacts with SUMO1; the interaction sumoylates RPS3. Interacts with UBC9. Interacts with CDK1; the interaction phosphorylates RPS3. Interacts with PRKCD; the interaction phosphorylates RPS3. Interacts with PKB/AKT; the interaction phosphorylates RPS3. Interacts with E2F1; the interaction occurs in the absence of nerve growth factor and increases transcription of pro-apoptotic proteins BCL2L11/BIM and HRK/Dp5. Interacts with the base excision repair proteins APEX1 and OGG1; interaction with OGG1 increases OGG1 N-glycosylase activity. Interacts with UNG; the interaction increases the uracil excision activity of UNG1. Interacts with HSP90; the interaction prevents the ubiquitination and proteasome-dependent degradation of RPS3 and is suppressed by increased ROS levels. Interacts with TOM70; the interaction promotes translocation of RPS3 to the mitochondrion. Interacts (via N-terminus) with RELA (via N-terminus); the interaction enhances the DNA-binding activity of the NF-kappa-B p65-p50 complex. Interacts with NFKBIA; the interaction is direct and may bridge the interaction between RPS3 and RELA. Interacts with IKKB; the interaction phosphorylates RPS3 and enhances its translocation to the nucleus. Interacts (via KH domain) with MDM2 and TP53. Interacts with TRADD. Interacts with CRY1. Post-translationally, methylation by PRMT1 is required for import into the nucleolus and for ribosome assembly. Sumoylation by SUMO1 enhances protein stability through increased resistance to proteolysis. Sumoylation occurs at one or more of the three consensus sites, Lys-18, Lys-214 and Lys-230. In terms of processing, phosphorylation at Thr-221 by CDK1 occurs mainly in G2/M phase. Phosphorylation by PRKCD occurs on a non-ribosomal-associated form which results in translocation of RPS3 to the nucleus and enhances its endonuclease activity. Phosphorylated on Ser-209 by IKKB in response to activation of the NF-kappa-B p65-p50 complex which enhances the association of RPS3 with importin-alpha and mediates the nuclear translocation of RPS3. Phosphorylation by MAPK is required for translocation to the nucleus following exposure of cells to DNA damaging agents such as hydrogen peroxide. Phosphorylation by PKB/AKT mediates RPS3 nuclear translocation, enhances RPS3 endonuclease activity and suppresses RPS3-induced neuronal apoptosis. Post-translationally, ubiquitinated; ubiquitination is prevented by interaction with HSP90 which stabilizes the protein. Monoubiquitinated at Lys-214 by RNF10 and ZNF598 when a ribosome has stalled during translation of poly(A) sequences, leading to preclude synthesis of a long poly-lysine tail and initiate the ribosome quality control (RQC) pathway to degrade the potentially detrimental aberrant nascent polypeptide. Deubiquitinated at Lys-214 by USP10, preventing degradation by the proteasome and promoting 40S ribosome subunit recycling following ribosome dissociation. Ufmylated by UFL1.

Its subcellular location is the cytoplasm. The protein localises to the nucleus. It localises to the nucleolus. It is found in the mitochondrion inner membrane. The protein resides in the cytoskeleton. Its subcellular location is the spindle. It catalyses the reaction 2'-deoxyribonucleotide-(2'-deoxyribose 5'-phosphate)-2'-deoxyribonucleotide-DNA = a 3'-end 2'-deoxyribonucleotide-(2,3-dehydro-2,3-deoxyribose 5'-phosphate)-DNA + a 5'-end 5'-phospho-2'-deoxyribonucleoside-DNA + H(+). In terms of biological role, component of the small ribosomal subunit. The ribosome is a large ribonucleoprotein complex responsible for the synthesis of proteins in the cell. Has endonuclease activity and plays a role in repair of damaged DNA. Cleaves phosphodiester bonds of DNAs containing altered bases with broad specificity and cleaves supercoiled DNA more efficiently than relaxed DNA. Displays high binding affinity for 7,8-dihydro-8-oxoguanine (8-oxoG), a common DNA lesion caused by reactive oxygen species (ROS). Has also been shown to bind with similar affinity to intact and damaged DNA. Stimulates the N-glycosylase activity of the base excision protein OGG1. Enhances the uracil excision activity of UNG1. Also stimulates the cleavage of the phosphodiester backbone by APEX1. When located in the mitochondrion, reduces cellular ROS levels and mitochondrial DNA damage. Has also been shown to negatively regulate DNA repair in cells exposed to hydrogen peroxide. Plays a role in regulating transcription as part of the NF-kappa-B p65-p50 complex where it binds to the RELA/p65 subunit, enhances binding of the complex to DNA and promotes transcription of target genes. Represses its own translation by binding to its cognate mRNA. Binds to and protects TP53/p53 from MDM2-mediated ubiquitination. Involved in spindle formation and chromosome movement during mitosis by regulating microtubule polymerization. Involved in induction of apoptosis through its role in activation of CASP8. Induces neuronal apoptosis by interacting with the E2F1 transcription factor and acting synergistically with it to up-regulate pro-apoptotic proteins BCL2L11/BIM and HRK/Dp5. Interacts with TRADD following exposure to UV radiation and induces apoptosis by caspase-dependent JNK activation. The polypeptide is Small ribosomal subunit protein uS3 (RPS3) (Bos taurus (Bovine)).